We begin with the raw amino-acid sequence, 527 residues long: ATP-dependent RNA helicase dbp8 (527 aa).

Positions 1 to 16 (MENDHSSSDEHEHENP) are enriched in basic and acidic residues. Residues 1-70 (MENDHSSSDE…DTSTGTDNPV (70 aa)) form a disordered region. Positions 86–114 (SSFKALNVAPWLIGSLTTMAVRKPTAIQR) match the Q motif motif. One can recognise a Helicase ATP-binding domain in the interval 117–296 (IPEILKGRDC…SMPRASTKPP (180 aa)). ATP is bound at residue 130–137 (SRTGSGKT). Residues 239–242 (DEAD) carry the DEAD box motif. The 163-residue stretch at 324–486 (TLKQTYLKVP…EWSEEGVSVE (163 aa)) folds into the Helicase C-terminal domain.

This sequence belongs to the DEAD box helicase family. DDX49/DBP8 subfamily.

It localises to the nucleus. The protein resides in the nucleolus. It catalyses the reaction ATP + H2O = ADP + phosphate + H(+). ATP-binding RNA helicase involved in 40S ribosomal subunit biogenesis and is required for the normal formation of 18S rRNAs through pre-rRNA processing at A0, A1 and A2 sites. Required for vegetative growth. In Aspergillus terreus (strain NIH 2624 / FGSC A1156), this protein is ATP-dependent RNA helicase dbp8 (dbp8).